We begin with the raw amino-acid sequence, 367 residues long: TATA-box-binding protein-like (367 aa).

A disordered region spans residues 1 to 26 (MKKQSKTHKVDYKYYNSGSKTSRNRN). The segment covering 16-26 (NSGSKTSRNRN) has biased composition (polar residues).

This sequence belongs to the TBP family.

This is TATA-box-binding protein-like from Acanthamoeba polyphaga (Amoeba).